The sequence spans 366 residues: Histidinol-phosphate aminotransferase 2 (366 aa).

Residues 1–11 are compositionally biased toward polar residues; that stretch reads MQVKDQLSSLQ. The segment at 1-21 is disordered; it reads MQVKDQLSSLQPYKPGKSPEQ. The residue at position 222 (Lys222) is an N6-(pyridoxal phosphate)lysine.

Belongs to the class-II pyridoxal-phosphate-dependent aminotransferase family. Histidinol-phosphate aminotransferase subfamily. In terms of assembly, homodimer. Pyridoxal 5'-phosphate serves as cofactor.

It carries out the reaction L-histidinol phosphate + 2-oxoglutarate = 3-(imidazol-4-yl)-2-oxopropyl phosphate + L-glutamate. It participates in amino-acid biosynthesis; L-histidine biosynthesis; L-histidine from 5-phospho-alpha-D-ribose 1-diphosphate: step 7/9. This is Histidinol-phosphate aminotransferase 2 from Bacillus thuringiensis subsp. konkukian (strain 97-27).